A 191-amino-acid polypeptide reads, in one-letter code: MYIIIGLGNPTREYEATRHNIGFDAITRLADDNNISLDTKKHKAICGKGMIGGEKVILAKPQTYMNLSGESVRELIDFYKVTKEEIIVIYDDISLDVGQLRIRTKGSAGGHNGIKNIIAHLGSDEFCRIKIGVGDKPKNWDLADYVLARFPKEEEPAIREALEKVSKACETILRDGAKVAMNLFNKKEINT.

Residue tyrosine 14 coordinates tRNA. The active-site Proton acceptor is histidine 19. Residues tyrosine 64, asparagine 66, and asparagine 112 each contribute to the tRNA site.

It belongs to the PTH family. In terms of assembly, monomer.

The protein resides in the cytoplasm. The enzyme catalyses an N-acyl-L-alpha-aminoacyl-tRNA + H2O = an N-acyl-L-amino acid + a tRNA + H(+). Hydrolyzes ribosome-free peptidyl-tRNAs (with 1 or more amino acids incorporated), which drop off the ribosome during protein synthesis, or as a result of ribosome stalling. Its function is as follows. Catalyzes the release of premature peptidyl moieties from peptidyl-tRNA molecules trapped in stalled 50S ribosomal subunits, and thus maintains levels of free tRNAs and 50S ribosomes. The protein is Peptidyl-tRNA hydrolase of Lachnoclostridium phytofermentans (strain ATCC 700394 / DSM 18823 / ISDg) (Clostridium phytofermentans).